The sequence spans 218 residues: Hypoxanthine-guanine phosphoribosyltransferase (218 aa).

Residue Ala-2 is modified to N-acetylalanine. Position 69 (Lys-69) interacts with GMP. Lys-103 is subject to N6-acetyllysine. Lys-115 is covalently cross-linked (Glycyl lysine isopeptide (Lys-Gly) (interchain with G-Cter in SUMO1); alternate). Residue Lys-115 forms a Glycyl lysine isopeptide (Lys-Gly) (interchain with G-Cter in SUMO2); alternate linkage. GMP-binding positions include 134 to 142 (EDIIDTGKT), Lys-166, 186 to 188 (KFV), and Asp-194. Residue Asp-138 is the Proton acceptor of the active site. Thr-142 is modified (phosphothreonine). Asp-194 is a binding site for Mg(2+).

It belongs to the purine/pyrimidine phosphoribosyltransferase family. In terms of assembly, homotetramer. The cofactor is Mg(2+).

The protein localises to the cytoplasm. It catalyses the reaction IMP + diphosphate = hypoxanthine + 5-phospho-alpha-D-ribose 1-diphosphate. The enzyme catalyses GMP + diphosphate = guanine + 5-phospho-alpha-D-ribose 1-diphosphate. It functions in the pathway purine metabolism; IMP biosynthesis via salvage pathway; IMP from hypoxanthine: step 1/1. Functionally, converts guanine to guanosine monophosphate, and hypoxanthine to inosine monophosphate. Transfers the 5-phosphoribosyl group from 5-phosphoribosylpyrophosphate onto the purine. Plays a central role in the generation of purine nucleotides through the purine salvage pathway. The chain is Hypoxanthine-guanine phosphoribosyltransferase (HPRT1) from Cricetulus griseus (Chinese hamster).